We begin with the raw amino-acid sequence, 238 residues long: Orotidine 5'-phosphate decarboxylase (238 aa).

Substrate is bound by residues Asp-13, Lys-35, 62–71, Thr-121, Arg-182, Gln-191, Gly-211, and Arg-212; that span reads DLKFHDIPNT. The Proton donor role is filled by Lys-64.

Belongs to the OMP decarboxylase family. Type 1 subfamily. As to quaternary structure, homodimer.

It catalyses the reaction orotidine 5'-phosphate + H(+) = UMP + CO2. The protein operates within pyrimidine metabolism; UMP biosynthesis via de novo pathway; UMP from orotate: step 2/2. Functionally, catalyzes the decarboxylation of orotidine 5'-monophosphate (OMP) to uridine 5'-monophosphate (UMP). In Saccharophagus degradans (strain 2-40 / ATCC 43961 / DSM 17024), this protein is Orotidine 5'-phosphate decarboxylase.